Reading from the N-terminus, the 897-residue chain is Zinc finger protein zas1 (897 aa).

C2H2-type zinc fingers lie at residues 26–50 (FYCT…ERTH) and 56–79 (FSCS…QQMH). The C2H2-type 3; atypical zinc-finger motif lies at 93-119 (ASCFLGFCVLAHDYVNLINARHFMIEH).

Its subcellular location is the nucleus. The protein is Zinc finger protein zas1 (zas1) of Schizosaccharomyces pombe (strain 972 / ATCC 24843) (Fission yeast).